Reading from the N-terminus, the 89-residue chain is NADH-ubiquinone oxidoreductase chain 4L (89 aa).

Transmembrane regions (helical) follow at residues 1–21 (MNLS…NRKN), 22–42 (IILM…LILI), and 55–75 (FAIY…GILV).

It belongs to the complex I subunit 4L family.

Its subcellular location is the mitochondrion membrane. The catalysed reaction is a ubiquinone + NADH + 5 H(+)(in) = a ubiquinol + NAD(+) + 4 H(+)(out). Core subunit of the mitochondrial membrane respiratory chain NADH dehydrogenase (Complex I) that is believed to belong to the minimal assembly required for catalysis. Complex I functions in the transfer of electrons from NADH to the respiratory chain. The immediate electron acceptor for the enzyme is believed to be ubiquinone. The polypeptide is NADH-ubiquinone oxidoreductase chain 4L (ND4L) (Trichophyton rubrum (Athlete's foot fungus)).